The primary structure comprises 94 residues: Evasin P1172 (94 aa).

3 cysteine pairs are disulfide-bonded: C35–C54, C39–C56, and C50–C67. 4 N-linked (GlcNAc...) asparagine glycosylation sites follow: N38, N44, N53, and N80.

It is found in the secreted. Functionally, salivary chemokine-binding protein which binds to host chemokines CXCL1, CXCL2, CXCL5 and CXCL8. The chain is Evasin P1172 from Ixodes ricinus (Common tick).